Here is a 629-residue protein sequence, read N- to C-terminus: Dapper homolog 3 (629 aa).

Residue S6 is modified to Phosphoserine. Disordered stretches follow at residues 50–76 and 105–574; these read PGMGGAEAEDEEDADEDEDAAAARRAA and GGLE…GGLV. Positions 56 to 69 are enriched in acidic residues; it reads EAEDEEDADEDEDA. Residues 63–87 are a coiled coil; the sequence is ADEDEDAAAARRAAAALEEQLEALP. Residues 105–150 are compositionally biased toward low complexity; it reads GGLEQESGRSSGFYEDPSSTGGPDSPPSTFCGDSGFSGSSSYGRLG. Phosphoserine is present on residues S165 and S239. Residue R258 is modified to Omega-N-methylarginine. Residues 301–311 show a composition bias toward basic and acidic residues; it reads PAREPSLERVG. Residues 316–335 are compositionally biased toward low complexity; that stretch reads SPAALSRAWASSWESEAAPE. Over residues 336–348 the composition is skewed to pro residues; it reads PAAPPAAPSPPDS. Residues S426 and S478 each carry the phosphoserine modification. The segment covering 525 to 535 has biased composition (low complexity); it reads SAGRLGPLGRR. Over residues 536 to 546 the composition is skewed to gly residues; sequence GPAGGVGGGYG. The span at 547 to 568 shows a compositional bias: low complexity; it reads ESESSASEGESPAFSSASSDSD. The short motif at 626-629 is the PDZ-binding element; sequence MTTV.

Belongs to the dapper family. As to quaternary structure, can form homodimers and heterodimers with DACT1 or DACT3. Interacts with CSNK1D, PKA catalytic subunit, PKC-type kinase, DVL1, DVL3, VANGL1, VANGL2 and CTNND1. Interacts with DVL2.

Functionally, may be involved in regulation of intracellular signaling pathways during development. Specifically thought to play a role in canonical and/or non-canonical Wnt signaling pathways through interaction with DSH (Dishevelled) family proteins. The protein is Dapper homolog 3 (DACT3) of Homo sapiens (Human).